An 83-amino-acid chain; its full sequence is Small ribosomal subunit protein uS17 (83 aa).

Belongs to the universal ribosomal protein uS17 family. As to quaternary structure, part of the 30S ribosomal subunit.

In terms of biological role, one of the primary rRNA binding proteins, it binds specifically to the 5'-end of 16S ribosomal RNA. This chain is Small ribosomal subunit protein uS17, found in Pseudoalteromonas atlantica (strain T6c / ATCC BAA-1087).